We begin with the raw amino-acid sequence, 902 residues long: Androgen receptor (902 aa).

The tract at residues 1–540 (MEVQLGLGRV…PIDYYFPPQK (540 aa)) is modulating. The tract at residues 1 to 569 (MEVQLGLGRV…GSCKVFFKRA (569 aa)) is interaction with ZNF318. Disordered stretches follow at residues 35-146 (QNPG…LSLL) and 194-224 (QQEV…YLGG). Ser61 is modified (phosphoserine; by CDK9). At Ser75 the chain carries Phosphoserine. A compositionally biased stretch (low complexity) spans 94–103 (QPSQQQSASE). Polar residues-rich tracts occupy residues 196–205 (EVISEGSSSV) and 213–224 (APSSSKDSYLGG). Tyr221 bears the Phosphotyrosine; by CSK mark. Residue Ser254 is modified to Phosphoserine. Phosphotyrosine; by CSK and TNK2 is present on Tyr265. A Phosphoserine modification is found at Ser290. Tyr305, Tyr344, Tyr355, and Tyr360 each carry phosphotyrosine; by CSK. Tyr361 carries the post-translational modification Phosphotyrosine; by CSK and TNK2. Lys384 participates in a covalent cross-link: Glycyl lysine isopeptide (Lys-Gly) (interchain with G-Cter in SUMO). At Tyr391 the chain carries Phosphotyrosine; by CSK. Residues 439–465 (EGQLYGPGGGGGSSSPSDAGPVAPYGY) form a disordered region. Residue Lys503 forms a Glycyl lysine isopeptide (Lys-Gly) (interchain with G-Cter in SUMO) linkage. Tyr517 and Tyr534 each carry phosphotyrosine; by CSK. The tract at residues 534 to 901 (YYFPPQKTCL…GKVKPIYFHT (368 aa)) is interaction with LPXN. The segment at residues 541 to 614 (TCLICGDEAS…AGMTLGARKL (74 aa)) is a DNA-binding region (nuclear receptor). NR C4-type zinc fingers lie at residues 542–562 (CLIC…CGSC) and 578–602 (CASR…LRKC). The segment at 554-644 (YGALTCGSCK…TEDPSQKMTV (91 aa)) is interaction with HIPK3. The segment at 574–901 (QKYLCASRND…GKVKPIYFHT (328 aa)) is interaction with CCAR1. Residues 607–901 (MTLGARKLKK…GKVKPIYFHT (295 aa)) are interaction with KAT7. A Phosphoserine modification is found at Ser633. The NR LBD domain occupies 651–882 (ECQPIFLNVL…DFPEMMAEII (232 aa)). 17beta-hydroxy-5alpha-androstan-3-one is bound by residues Asn688 and Arg735. Residues Lys828 and Lys830 each participate in a glycyl lysine isopeptide (Lys-Gly) (interchain with G-Cter in ubiquitin) cross-link. Thr860 serves as a coordination point for 17beta-hydroxy-5alpha-androstan-3-one. At Tyr898 the chain carries Phosphotyrosine; by CSK.

It belongs to the nuclear hormone receptor family. NR3 subfamily. As to quaternary structure, binds DNA as a homodimer. Part of a ternary complex containing AR, EFCAB6/DJBP and PARK7. Interacts with HIPK3 and NR0B2 in the presence of androgen. The ligand binding domain interacts with KAT7/HBO1 in the presence of dihydrotestosterone. Interacts with EFCAB6/DJBP, PQBP1, RANBP9, RBAK, SPDEF, SRA1, TGFB1I1, ZNF318 and RREB1. Interacts with ZMIZ1/ZIMP10 and ZMIZ2/ZMIP7 which both enhance its transactivation activity. Interacts with SLC30A9 and RAD54L2/ARIP4. Interacts with MACROD1 (via macro domain). Interacts via the ligand-binding domain with LXXLL and FXXLF motifs from NCOA1, NCOA2, NCOA3 and MAGEA11. Interacts (via nuclear receptor DNA binding domain and nuclear receptor ligand binding domain) with NCOA4. The AR N-terminal poly-Gln region binds Ran resulting in enhancement of AR-mediated transactivation. Ran-binding decreases as the poly-Gln length increases. Interacts with HIP1 (via coiled coil domain). Interacts (via ligand-binding domain) with TRIM68. Interacts with TNK2. Interacts with USP26. Interacts with RNF6. Interacts (regulated by RNF6 probably through polyubiquitination) with RNF14; regulates AR transcriptional activity. Interacts with PRMT2 and TRIM24. Interacts with RACK1. Interacts with RANBP10; this interaction enhances dihydrotestosterone-induced AR transcriptional activity. Interacts with PRPF6 in a hormone-independent way; this interaction enhances dihydrotestosterone-induced AR transcriptional activity. Interacts with STK4/MST1. Interacts with ZIPK/DAPK3. Interacts with LPXN. Interacts with MAK. Part of a complex containing AR, MAK and NCOA3. Interacts with CRY1. Interacts with CCAR1 and GATA2. Interacts with BUD31. Interacts with ARID4A. Interacts with ARID4B. Interacts (via NR LBD domain) with ZBTB7A; the interaction is direct and androgen-dependent. Interacts with NCOR1. Interacts with NCOR2. Interacts with CRY2 in a ligand-dependent manner. Phosphorylated in prostate cancer cells in response to several growth factors including EGF. Phosphorylation is induced by c-Src kinase (CSK). Tyr-517 is one of the major phosphorylation sites and an increase in phosphorylation and Src kinase activity is associated with prostate cancer progression. Phosphorylation by TNK2 enhances the DNA-binding and transcriptional activity. Phosphorylation at Ser-61 by CDK9 regulates AR promoter selectivity and cell growth. Phosphorylation by PAK6 leads to AR-mediated transcription inhibition. In terms of processing, sumoylated on Lys-384 (major) and Lys-503. Ubiquitinated. Deubiquitinated by USP26. 'Lys-6' and 'Lys-27'-linked polyubiquitination by RNF6 modulates AR transcriptional activity and specificity. Post-translationally, palmitoylated by ZDHHC7 and ZDHHC21. Palmitoylation is required for plasma membrane targeting and for rapid intracellular signaling via ERK and AKT kinases and cAMP generation. In terms of tissue distribution, highest levels in the seminal vesicle, ventral prostate and coagulating gland with lower levels in the kidney and levator ani muscle.

Its subcellular location is the nucleus. It is found in the cytoplasm. Its function is as follows. Steroid hormone receptors are ligand-activated transcription factors that regulate eukaryotic gene expression and affect cellular proliferation and differentiation in target tissues. Transcription factor activity is modulated by bound coactivator and corepressor proteins like ZBTB7A that recruits NCOR1 and NCOR2 to the androgen response elements/ARE on target genes, negatively regulating androgen receptor signaling and androgen-induced cell proliferation. Transcription activation is also down-regulated by NR0B2. Activated, but not phosphorylated, by HIPK3 and ZIPK/DAPK3. This Rattus norvegicus (Rat) protein is Androgen receptor (Ar).